We begin with the raw amino-acid sequence, 198 residues long: Orotate phosphoribosyltransferase (198 aa).

5-phospho-alpha-D-ribose 1-diphosphate is bound by residues Arg-108, Lys-109, Lys-112, His-114, and 135 to 143 (EDVVTTGKS). Orotate is bound by residues Thr-139 and Arg-167.

The protein belongs to the purine/pyrimidine phosphoribosyltransferase family. PyrE subfamily. Homodimer. Requires Mg(2+) as cofactor.

The enzyme catalyses orotidine 5'-phosphate + diphosphate = orotate + 5-phospho-alpha-D-ribose 1-diphosphate. Its pathway is pyrimidine metabolism; UMP biosynthesis via de novo pathway; UMP from orotate: step 1/2. Catalyzes the transfer of a ribosyl phosphate group from 5-phosphoribose 1-diphosphate to orotate, leading to the formation of orotidine monophosphate (OMP). This chain is Orotate phosphoribosyltransferase, found in Synechocystis sp. (strain ATCC 27184 / PCC 6803 / Kazusa).